A 22-amino-acid chain; its full sequence is Phospholipase A2 (22 aa).

This sequence belongs to the phospholipase A2 family. Group II subfamily. Requires Ca(2+) as cofactor. Post-translationally, seven disulfide bonds are present. In terms of tissue distribution, expressed by the venom gland.

It is found in the secreted. It catalyses the reaction a 1,2-diacyl-sn-glycero-3-phosphocholine + H2O = a 1-acyl-sn-glycero-3-phosphocholine + a fatty acid + H(+). Snake venom phospholipase A2 (PLA2) that inhibits neuromuscular transmission by blocking acetylcholine release from the nerve termini. PLA2 catalyzes the calcium-dependent hydrolysis of the 2-acyl groups in 3-sn-phosphoglycerides. This is Phospholipase A2 from Daboia siamensis (Eastern Russel's viper).